Consider the following 107-residue polypeptide: Sulfurtransferase Alvin_2599 (107 aa).

Positions Asp-16–Ala-104 constitute a Rhodanese domain. Cys-64 serves as the catalytic Cysteine persulfide intermediate.

Monomer.

It localises to the cytoplasm. It participates in energy metabolism; sulfur metabolism. In terms of biological role, sulfur carrier protein involved in sulfur trafficking for oxidative dissimilatory sulfur metabolism. Component of a sulfur relay system that starts with the sulfur-mobilizing rhodanese-like protein Rhd_2599 (Alvin_2599), which transfers the sulfur from a low-molecular-weight thiol, maybe glutathione, to the TusA protein (Alvin_2600); TusA serves as the sulfur donor for DsrEFH, which persulfurates DsrC; persulfurated DsrC very probably serves as a direct substrate for reverse-acting sulfite reductase, DsrAB. Is able to catalyze the sulfur transfer reaction from thiosulfate or glutathione (GSSH) to cyanide in vitro, however, thiosulfate is unlikely an in vivo substrate. The chain is Sulfurtransferase Alvin_2599 from Allochromatium vinosum (strain ATCC 17899 / DSM 180 / NBRC 103801 / NCIMB 10441 / D) (Chromatium vinosum).